The chain runs to 607 residues: UvrABC system protein C (607 aa).

The GIY-YIG domain occupies 16 to 94 (GRPGVYRMFD…IKEWRPPYNI (79 aa)). In terms of domain architecture, UVR spans 203 to 238 (NALTDELSTAMEAAASTLDFEKAAELRDQISLLRRV).

The protein belongs to the UvrC family. In terms of assembly, interacts with UvrB in an incision complex.

The protein localises to the cytoplasm. In terms of biological role, the UvrABC repair system catalyzes the recognition and processing of DNA lesions. UvrC both incises the 5' and 3' sides of the lesion. The N-terminal half is responsible for the 3' incision and the C-terminal half is responsible for the 5' incision. In Pseudomonas fluorescens (strain ATCC BAA-477 / NRRL B-23932 / Pf-5), this protein is UvrABC system protein C.